A 345-amino-acid polypeptide reads, in one-letter code: S-adenosylmethionine:tRNA ribosyltransferase-isomerase (345 aa).

This sequence belongs to the QueA family. Monomer.

Its subcellular location is the cytoplasm. The catalysed reaction is 7-aminomethyl-7-carbaguanosine(34) in tRNA + S-adenosyl-L-methionine = epoxyqueuosine(34) in tRNA + adenine + L-methionine + 2 H(+). It participates in tRNA modification; tRNA-queuosine biosynthesis. Transfers and isomerizes the ribose moiety from AdoMet to the 7-aminomethyl group of 7-deazaguanine (preQ1-tRNA) to give epoxyqueuosine (oQ-tRNA). The protein is S-adenosylmethionine:tRNA ribosyltransferase-isomerase of Shewanella woodyi (strain ATCC 51908 / MS32).